Reading from the N-terminus, the 469-residue chain is Uronate isomerase (469 aa).

Belongs to the metallo-dependent hydrolases superfamily. Uronate isomerase family.

The catalysed reaction is D-glucuronate = D-fructuronate. It carries out the reaction aldehydo-D-galacturonate = keto-D-tagaturonate. It participates in carbohydrate metabolism; pentose and glucuronate interconversion. In Corynebacterium efficiens (strain DSM 44549 / YS-314 / AJ 12310 / JCM 11189 / NBRC 100395), this protein is Uronate isomerase.